Here is a 230-residue protein sequence, read N- to C-terminus: Large ribosomal subunit protein uL1 (230 aa).

It belongs to the universal ribosomal protein uL1 family. In terms of assembly, part of the 50S ribosomal subunit.

Functionally, binds directly to 23S rRNA. The L1 stalk is quite mobile in the ribosome, and is involved in E site tRNA release. In terms of biological role, protein L1 is also a translational repressor protein, it controls the translation of the L11 operon by binding to its mRNA. The protein is Large ribosomal subunit protein uL1 of Nitrobacter hamburgensis (strain DSM 10229 / NCIMB 13809 / X14).